The following is a 167-amino-acid chain: MRVEVGQIVNTHGIKGEIKVKSNSDFTDVRFQPGQVLTVVHNNNDLEYTVKSHRVHKGLHMLTFEGINNINDIEHLKGSSIYQERDHEDIVLEENEFYYSDIIGCTVFDDQETPIGRVINIFETGANDVWVIKESKEYLIPYIADVVKEVDVENKKIIITPMEGLLD.

The PRC barrel domain maps to Glu-94–Leu-165.

This sequence belongs to the RimM family. As to quaternary structure, binds ribosomal protein uS19.

It localises to the cytoplasm. An accessory protein needed during the final step in the assembly of 30S ribosomal subunit, possibly for assembly of the head region. Essential for efficient processing of 16S rRNA. May be needed both before and after RbfA during the maturation of 16S rRNA. It has affinity for free ribosomal 30S subunits but not for 70S ribosomes. This is Ribosome maturation factor RimM from Staphylococcus aureus (strain MRSA252).